The following is a 283-amino-acid chain: Pantothenate synthetase (283 aa).

30-37 (MGALHEGH) provides a ligand contact to ATP. H37 acts as the Proton donor in catalysis. Q61 contacts (R)-pantoate. A beta-alanine-binding site is contributed by Q61. 147-150 (GEKD) contributes to the ATP binding site. A (R)-pantoate-binding site is contributed by Q153. Residues V176 and 184–187 (VSSR) each bind ATP.

This sequence belongs to the pantothenate synthetase family. In terms of assembly, homodimer.

The protein localises to the cytoplasm. It carries out the reaction (R)-pantoate + beta-alanine + ATP = (R)-pantothenate + AMP + diphosphate + H(+). The protein operates within cofactor biosynthesis; (R)-pantothenate biosynthesis; (R)-pantothenate from (R)-pantoate and beta-alanine: step 1/1. Its function is as follows. Catalyzes the condensation of pantoate with beta-alanine in an ATP-dependent reaction via a pantoyl-adenylate intermediate. This chain is Pantothenate synthetase, found in Chlorobium limicola (strain DSM 245 / NBRC 103803 / 6330).